The primary structure comprises 49 residues: uncharacterized protein (49 aa).

The N-terminal stretch at 1–22 (MKLNAFHLVVVVLIVSIFSVSS) is a signal peptide.

Its subcellular location is the secreted. This is an uncharacterized protein from Dictyostelium discoideum (Social amoeba).